A 37-amino-acid polypeptide reads, in one-letter code: Large ribosomal subunit protein bL36 (37 aa).

The protein belongs to the bacterial ribosomal protein bL36 family.

This is Large ribosomal subunit protein bL36 from Nitratidesulfovibrio vulgaris (strain DSM 19637 / Miyazaki F) (Desulfovibrio vulgaris).